A 274-amino-acid polypeptide reads, in one-letter code: Exosome complex component Rrp42 (274 aa).

It belongs to the RNase PH family. Rrp42 subfamily. In terms of assembly, component of the archaeal exosome complex. Forms a hexameric ring-like arrangement composed of 3 Rrp41-Rrp42 heterodimers. The hexameric ring associates with a trimer of Rrp4 and/or Csl4 subunits.

Its subcellular location is the cytoplasm. Non-catalytic component of the exosome, which is a complex involved in RNA degradation. Contributes to the structuring of the Rrp41 active site. In Pyrobaculum aerophilum (strain ATCC 51768 / DSM 7523 / JCM 9630 / CIP 104966 / NBRC 100827 / IM2), this protein is Exosome complex component Rrp42.